A 759-amino-acid polypeptide reads, in one-letter code: Phosphoribosylformylglycinamidine synthase subunit PurL (759 aa).

H61 is a catalytic residue. Residues Y64 and K105 each coordinate ATP. E107 serves as a coordination point for Mg(2+). Substrate-binding positions include 108-111 and R130; that span reads SHNH. H109 acts as the Proton acceptor in catalysis. D131 is a Mg(2+) binding site. Residue Q260 participates in substrate binding. D288 is a Mg(2+) binding site. 332-334 is a binding site for substrate; sequence ESQ. ATP-binding residues include D520 and G557. Mg(2+) is bound at residue N558. S560 serves as a coordination point for substrate.

Belongs to the FGAMS family. As to quaternary structure, monomer. Part of the FGAM synthase complex composed of 1 PurL, 1 PurQ and 2 PurS subunits.

It localises to the cytoplasm. It carries out the reaction N(2)-formyl-N(1)-(5-phospho-beta-D-ribosyl)glycinamide + L-glutamine + ATP + H2O = 2-formamido-N(1)-(5-O-phospho-beta-D-ribosyl)acetamidine + L-glutamate + ADP + phosphate + H(+). Its pathway is purine metabolism; IMP biosynthesis via de novo pathway; 5-amino-1-(5-phospho-D-ribosyl)imidazole from N(2)-formyl-N(1)-(5-phospho-D-ribosyl)glycinamide: step 1/2. Part of the phosphoribosylformylglycinamidine synthase complex involved in the purines biosynthetic pathway. Catalyzes the ATP-dependent conversion of formylglycinamide ribonucleotide (FGAR) and glutamine to yield formylglycinamidine ribonucleotide (FGAM) and glutamate. The FGAM synthase complex is composed of three subunits. PurQ produces an ammonia molecule by converting glutamine to glutamate. PurL transfers the ammonia molecule to FGAR to form FGAM in an ATP-dependent manner. PurS interacts with PurQ and PurL and is thought to assist in the transfer of the ammonia molecule from PurQ to PurL. This chain is Phosphoribosylformylglycinamidine synthase subunit PurL, found in Thermoplasma volcanium (strain ATCC 51530 / DSM 4299 / JCM 9571 / NBRC 15438 / GSS1).